The chain runs to 503 residues: Potassium voltage-gated channel subfamily V member 1 (503 aa).

2 disordered regions span residues 1–20 (MDLS…DSGS) and 171–192 (KKDT…QGPC). Residues 3-213 (LSPRNRPLLD…EKPGSSTAAR (211 aa)) are Cytoplasmic-facing. Residues 10-20 (LLDSSSLDSGS) show a composition bias toward low complexity. The span at 171-184 (KKDTDDQESQHESE) shows a compositional bias: basic and acidic residues. The chain crosses the membrane as a helical span at residues 214–234 (IFGVISIIFVAVSIVNMALMS). The Extracellular segment spans residues 235 to 241 (AELSWLN). A helical membrane pass occupies residues 242 to 262 (LQLLEILEYVCISWFTGEFIL). At 263–279 (RFLCVKDRCHFLRKVPN) the chain is on the cytoplasmic side. Residues 280 to 300 (IIDLLAILPFYITLLVESLSG) traverse the membrane as a helical segment. Over 301–312 (SHTTQELENVGR) the chain is Extracellular. A helical; Voltage-sensor transmembrane segment spans residues 313 to 334 (LVQVLRLLRALRMLKLGRHSTG). The Cytoplasmic portion of the chain corresponds to 335–348 (LRSLGMTITQCYEE). The chain crosses the membrane as a helical span at residues 349-369 (VGLLLLFLSVGISIFSTIEYF). Positions 395 to 400 (TVGYGD) match the Selectivity filter motif. A helical membrane pass occupies residues 410-430 (IVAFMCILSGILVLALPIAII). Over 431–503 (NDRFSACYFT…RSSGGDDFWF (73 aa)) the chain is Cytoplasmic.

It belongs to the potassium channel family. V (TC 1.A.1.2) subfamily. Kv8.1/KCNV1 sub-subfamily. As to quaternary structure, heteromultimer with KCNB1 and KCNB2. Interacts with KCNC4 and KCND1. Detected in brain, in neocortex, olfactory tubercle, hippocampus, dentate gyrus, piriform cortex and amygdala. Detected in Purkinje cells and granular cells of the cerebellum, in hippocampal CA4 neurons and neocortex pyramidal cells.

Its subcellular location is the cell membrane. Functionally, potassium channel subunit that does not form functional channels by itself. Modulates KCNB1 and KCNB2 channel activity by shifting the threshold for inactivation to more negative values and by slowing the rate of inactivation. Can down-regulate the channel activity of KCNB1, KCNB2, KCNC4 and KCND1, possibly by trapping them in intracellular membranes. In Rattus norvegicus (Rat), this protein is Potassium voltage-gated channel subfamily V member 1 (Kcnv1).